Consider the following 206-residue polypeptide: Guanylate kinase (206 aa).

The 179-residue stretch at 6 to 184 (GTLYIISAPS…ALGDLKAIFR (179 aa)) folds into the Guanylate kinase-like domain. 13–20 (APSGAGKS) provides a ligand contact to ATP.

Belongs to the guanylate kinase family.

It is found in the cytoplasm. The enzyme catalyses GMP + ATP = GDP + ADP. Its function is as follows. Essential for recycling GMP and indirectly, cGMP. In Pseudomonas fluorescens (strain ATCC BAA-477 / NRRL B-23932 / Pf-5), this protein is Guanylate kinase.